The sequence spans 196 residues: Protein GrpE (196 aa).

Residues 1–39 are disordered; the sequence is MSSKEQKTPEGQAPEEIIMDQHEEIEAVEPEASAEQVDP.

It belongs to the GrpE family. In terms of assembly, homodimer.

It is found in the cytoplasm. In terms of biological role, participates actively in the response to hyperosmotic and heat shock by preventing the aggregation of stress-denatured proteins, in association with DnaK and GrpE. It is the nucleotide exchange factor for DnaK and may function as a thermosensor. Unfolded proteins bind initially to DnaJ; upon interaction with the DnaJ-bound protein, DnaK hydrolyzes its bound ATP, resulting in the formation of a stable complex. GrpE releases ADP from DnaK; ATP binding to DnaK triggers the release of the substrate protein, thus completing the reaction cycle. Several rounds of ATP-dependent interactions between DnaJ, DnaK and GrpE are required for fully efficient folding. The sequence is that of Protein GrpE from Escherichia coli O139:H28 (strain E24377A / ETEC).